Consider the following 86-residue polypeptide: Small ribosomal subunit protein bS16 (86 aa).

The protein belongs to the bacterial ribosomal protein bS16 family.

This is Small ribosomal subunit protein bS16 from Bordetella bronchiseptica (strain ATCC BAA-588 / NCTC 13252 / RB50) (Alcaligenes bronchisepticus).